The chain runs to 504 residues: Maturase K (504 aa).

This sequence belongs to the intron maturase 2 family. MatK subfamily.

The protein resides in the plastid. It is found in the chloroplast. Functionally, usually encoded in the trnK tRNA gene intron. Probably assists in splicing its own and other chloroplast group II introns. The chain is Maturase K from Simmondsia chinensis (Jojoba).